We begin with the raw amino-acid sequence, 464 residues long: Septin homolog spn5 (464 aa).

Positions 28 to 91 are disordered; sequence QVDESSAKRS…VPNSNGKSIP (64 aa). Composition is skewed to basic and acidic residues over residues 41–54 and 69–81; these read ESRKSKDVTRKEQI and TAKDKKTEFKQDE. One can recognise a Septin-type G domain in the interval 115–370; that stretch reads NGIDINLIVV…DTFRTEKLVA (256 aa). Residues 125-132 form a G1 motif region; it reads GESSLGKT. GTP contacts are provided by residues 125-132, Thr151, Gly177, 257-265, Gly304, and Arg319; these read GESSLGKT and KADTMTSDE. Residues 174 to 177 are G3 motif; the sequence is DTPG. The interval 256 to 259 is G4 motif; sequence GKAD. Residues 396 to 453 adopt a coiled-coil conformation; that stretch reads LVEEALTKVMKEKYREKENNLELLETNLKTHHKDYKHALKKRITALEEEKNRLIKEIG.

Belongs to the TRAFAC class TrmE-Era-EngA-EngB-Septin-like GTPase superfamily. Septin GTPase family. As to quaternary structure, component of the sporulation-specific septin complex composed of at least spn2, spn5, spn6 and spn7.

It localises to the nucleus. The protein localises to the forespore membrane. Septin-like protein involved in the correct orientation of forespore membrane extension during sporulation. The sequence is that of Septin homolog spn5 (spn5) from Schizosaccharomyces pombe (strain 972 / ATCC 24843) (Fission yeast).